The sequence spans 582 residues: Semenogelin-2 (582 aa).

The first 23 residues, 1-23 (MKSIILFVLSLLLILEKQAAVMG), serve as a signal peptide directing secretion. 5 disordered regions span residues 25-62 (KGGS…SKGS), 131-156 (KGGQ…KGIF), 173-192 (KEQA…GSQS), 272-477 (NLNQ…EQRQ), and 502-554 (VEGK…SGAH). The span at 50–59 (GQKDKQHTES) shows a compositional bias: basic and acidic residues. Composition is skewed to polar residues over residues 137–151 (HGTQ…NSPS) and 174–192 (EQAS…GSQS). Positions 292-310 (RTEERQLNHGEKSVQKDVS) are enriched in basic and acidic residues. The segment covering 325–335 (KSQNQVTIPSQ) has biased composition (polar residues). Residues 336–345 (DQEHGHKENK) show a composition bias toward basic and acidic residues. Residues 385 to 395 (KSQNQVTIPSQ) are compositionally biased toward polar residues. Over residues 396 to 405 (DQEHGHKENK) the composition is skewed to basic and acidic residues. Positions 445-455 (KSQNQVTIPSQ) are enriched in polar residues. Positions 456-465 (DQEHGHKENK) are enriched in basic and acidic residues. Polar residues-rich tracts occupy residues 466-477 (ISYQSSSTEQRQ) and 506-529 (SQIQ…NSGK). The segment covering 537–546 (LLSHEQEGRY) has biased composition (basic and acidic residues).

Belongs to the semenogelin family. Interacts with SERPINA5.

Its subcellular location is the secreted. Functionally, participates in the formation of a gel matrix (sperm coagulum) entrapping the accessory gland secretions and ejaculated spermatozoa. This Macaca nemestrina (Pig-tailed macaque) protein is Semenogelin-2 (SEMG2).